Here is a 54-residue protein sequence, read N- to C-terminus: Ribulose bisphosphate carboxylase large chain (54 aa).

Positions 1-2 (MS) are excised as a propeptide. N-acetylproline is present on Pro-3. An N6,N6,N6-trimethyllysine modification is found at Lys-14.

This sequence belongs to the RuBisCO large chain family. Type I subfamily. As to quaternary structure, heterohexadecamer of 8 large chains and 8 small chains.

It is found in the plastid. The protein localises to the chloroplast. It carries out the reaction 2 (2R)-3-phosphoglycerate + 2 H(+) = D-ribulose 1,5-bisphosphate + CO2 + H2O. The enzyme catalyses D-ribulose 1,5-bisphosphate + O2 = 2-phosphoglycolate + (2R)-3-phosphoglycerate + 2 H(+). RuBisCO catalyzes two reactions: the carboxylation of D-ribulose 1,5-bisphosphate, the primary event in carbon dioxide fixation, as well as the oxidative fragmentation of the pentose substrate in the photorespiration process. Both reactions occur simultaneously and in competition at the same active site. This Colletia hystrix (Crucifixion thorn) protein is Ribulose bisphosphate carboxylase large chain (rbcL).